The primary structure comprises 110 residues: UPF0060 membrane protein SACE_5620 (110 aa).

4 helical membrane-spanning segments follow: residues 8–28 (VVLF…VWQG), 34–54 (GLLW…VATF), 63–83 (ILAA…VVVD), and 89–109 (RWDL…MYAP).

This sequence belongs to the UPF0060 family.

The protein resides in the cell membrane. The sequence is that of UPF0060 membrane protein SACE_5620 from Saccharopolyspora erythraea (strain ATCC 11635 / DSM 40517 / JCM 4748 / NBRC 13426 / NCIMB 8594 / NRRL 2338).